A 277-amino-acid chain; its full sequence is Tumor necrosis factor receptor superfamily member 4 (277 aa).

Positions 1–28 are cleaved as a signal peptide; sequence MCVGARRLGRGPCAALLLLGLGLSTVTG. The Extracellular portion of the chain corresponds to 29-214; that stretch reads LHCVGDTYPS…RPVEVPGGRA (186 aa). TNFR-Cys repeat units lie at residues 30-65 and 66-107; these read HCVG…TVCR and PCGP…DTVC. Intrachain disulfides connect C31/C42, C43/C56, C46/C64, C67/C81, C84/C99, C87/C107, C109/C125, and C128/C141. The TNFR-Cys 3; truncated repeat unit spans residues 108–126; sequence RCRAGTQPLDSYKPGVDCA. The TNFR-Cys 4 repeat unit spans residues 127 to 167; the sequence is PCPPGHFSPGDNQACKPWTNCTLAGKHTLQPASNSSDAICE. N-linked (GlcNAc...) asparagine glycans are attached at residues N146 and N160. C147 and C166 are disulfide-bonded. The disordered stretch occupies residues 158 to 209; that stretch reads ASNSSDAICEDRDPPATQPQETQGPPARPITVQPTEAWPRTSQGPSTRPVEV. Residues 215–235 traverse the membrane as a helical segment; the sequence is VAAILGLGLVLGLLGPLAILL. At 236–277 the chain is on the cytoplasmic side; it reads ALYLLRRDQRLPPDAHKPPGGGSFRTPIQEEQADAHSTLAKI. Residues 248–277 are disordered; sequence PDAHKPPGGGSFRTPIQEEQADAHSTLAKI.

In terms of assembly, interacts with TRAF2, TRAF3 and TRAF5. As to quaternary structure, (Microbial infection) Interacts with Human herpesvirus 6B/HHV-6B gQ1:gQ2 proteins.

The protein resides in the membrane. Its function is as follows. Receptor for TNFSF4/OX40L/GP34. Is a costimulatory molecule implicated in long-term T-cell immunity. Functionally, (Microbial infection) Acts as a receptor for human herpesvirus 6B/HHV-6B. The chain is Tumor necrosis factor receptor superfamily member 4 (TNFRSF4) from Homo sapiens (Human).